The primary structure comprises 760 residues: ATP-dependent zinc metalloprotease FtsH (760 aa).

Topologically, residues 1-5 (MNRKN) are cytoplasmic. The helical transmembrane segment at 6–26 (VTRTITAIAVVVLLGWSFFYF) threads the bilayer. At 27–110 (SDDTRGYKPV…KVSTVVNQGS (84 aa)) the chain is on the extracellular side. The chain crosses the membrane as a helical span at residues 111 to 131 (ILGELLVYVLPLLLLVGLFVM). The Cytoplasmic portion of the chain corresponds to 132-760 (FSRMQGGARM…EVSRTKPAHG (629 aa)). Residue 203 to 210 (GPPGTGKT) coordinates ATP. A Zn(2+)-binding site is contributed by H425. E426 is an active-site residue. Residues H429 and D501 each coordinate Zn(2+). The disordered stretch occupies residues 616-760 (DFGGRIPSDK…EVSRTKPAHG (145 aa)). Low complexity predominate over residues 650–669 (AFKAAIAQATQAAEAARSDA). The span at 740–750 (GSDESSAEQDD) shows a compositional bias: acidic residues.

This sequence in the central section; belongs to the AAA ATPase family. The protein in the C-terminal section; belongs to the peptidase M41 family. Homohexamer. Zn(2+) serves as cofactor.

The protein resides in the cell membrane. Acts as a processive, ATP-dependent zinc metallopeptidase for both cytoplasmic and membrane proteins. Plays a role in the quality control of integral membrane proteins. The protein is ATP-dependent zinc metalloprotease FtsH of Mycobacterium bovis (strain ATCC BAA-935 / AF2122/97).